A 226-amino-acid chain; its full sequence is Thioredoxin domain-containing protein 9 (226 aa).

A Thioredoxin domain is found at Glu-75–Gly-180. Phosphoserine is present on residues Ser-188, Ser-221, and Ser-223.

Forms ternary complexes with the chaperonin TCP1 complex, spanning the cylindrical chaperonin cavity and contacting at least 2 subunits. Expressed in testis, liver, heart, kidney, brain, spleen and lung.

Its subcellular location is the cytoplasm. It is found in the nucleus. It localises to the cytoskeleton. The protein localises to the microtubule organizing center. The protein resides in the centrosome. Its subcellular location is the midbody. In terms of biological role, significantly diminishes the chaperonin TCP1 complex ATPase activity, thus negatively impacts protein folding, including that of actin or tubulin. The polypeptide is Thioredoxin domain-containing protein 9 (Txndc9) (Mus musculus (Mouse)).